The primary structure comprises 783 residues: Polyribonucleotide nucleotidyltransferase 1, mitochondrial (783 aa).

The N-terminal 45 residues, methionine 1 to arginine 45, are a transit peptide targeting the mitochondrion. N6-acetyllysine occurs at positions 250, 264, 285, and 289. Lysine 552 is subject to N6-succinyllysine. The region spanning proline 605–isoleucine 664 is the KH domain. The 72-residue stretch at glycine 679–lysine 750 folds into the S1 motif domain. A phosphoserine mark is found at serine 754 and serine 782.

This sequence belongs to the polyribonucleotide nucleotidyltransferase family. Homotrimer; in free form. Homooligomer. Component of the mitochondrial degradosome (mtEXO) complex which is a heteropentamer containing 2 copies of SUPV3L1 and 3 copies of PNPT1. As part of the mitochondrial degradosome complex, interacts with GRSF1 in an RNA-dependent manner; the interaction enhances the activity of the complex. Interacts with TCL1A; the interaction has no effect on PNPT1 exonuclease activity.

The protein localises to the cytoplasm. It is found in the mitochondrion matrix. Its subcellular location is the mitochondrion intermembrane space. The enzyme catalyses RNA(n+1) + phosphate = RNA(n) + a ribonucleoside 5'-diphosphate. In terms of biological role, RNA-binding protein implicated in numerous RNA metabolic processes. Catalyzes the phosphorolysis of single-stranded polyribonucleotides processively in the 3'-to-5' direction. Mitochondrial intermembrane factor with RNA-processing exoribonulease activity. Component of the mitochondrial degradosome (mtEXO) complex, that degrades 3' overhang double-stranded RNA with a 3'-to-5' directionality in an ATP-dependent manner. Involved in the degradation of non-coding mitochondrial transcripts (MT-ncRNA) and tRNA-like molecules. Required for correct processing and polyadenylation of mitochondrial mRNAs. Plays a role as a cytoplasmic RNA import factor that mediates the translocation of small RNA components, like the 5S RNA, the RNA subunit of ribonuclease P and the mitochondrial RNA-processing (MRP) RNA, into the mitochondrial matrix. Plays a role in mitochondrial morphogenesis and respiration; regulates the expression of the electron transport chain (ETC) components at the mRNA and protein levels. In the cytoplasm, shows a 3'-to-5' exoribonuclease mediating mRNA degradation activity; degrades c-myc mRNA upon treatment with IFNB1/IFN-beta, resulting in a growth arrest in melanoma cells. Regulates the stability of specific mature miRNAs in melanoma cells; specifically and selectively degrades miR-221, preferentially. Also plays a role in RNA cell surveillance by cleaning up oxidized RNAs. Binds to the RNA subunit of ribonuclease P, MRP RNA and miR-221 microRNA. The polypeptide is Polyribonucleotide nucleotidyltransferase 1, mitochondrial (Homo sapiens (Human)).